The following is a 262-amino-acid chain: Ribosome-recycling factor, mitochondrial (262 aa).

The N-terminal 55 residues, 1 to 55, are a transit peptide targeting the mitochondrion; that stretch reads MALGLKCFRMVHPTFRNYLAASIRPVSEVTLKTVHERQHGHRQYMAYSAVPVRHF.

The protein belongs to the RRF family.

It localises to the mitochondrion. Its function is as follows. Responsible for the disassembly of ribosomes from messenger RNA at the termination of mitochondrial protein biosynthesis. Acts in collaboration with GFM2. Promotes mitochondrial ribosome recycling by dissolution of intersubunit contacts. In Homo sapiens (Human), this protein is Ribosome-recycling factor, mitochondrial.